A 343-amino-acid polypeptide reads, in one-letter code: Multidrug resistance protein MdtN (343 aa).

Residues 1–12 (MESTPKKAPRSK) lie on the Cytoplasmic side of the membrane. The chain crosses the membrane as a helical; Signal-anchor for type II membrane protein span at residues 13 to 33 (FPALLVVALALVALVFVIWRV). Over 34-343 (DSAPSTNDAY…ASAVANLEPQ (310 aa)) the chain is Periplasmic.

This sequence belongs to the membrane fusion protein (MFP) (TC 8.A.1) family. In terms of assembly, could be part of a tripartite efflux system composed of MdtN, MdtO and MdtP.

Its subcellular location is the cell inner membrane. Its function is as follows. Could be involved in resistance to puromycin, acriflavine and tetraphenylarsonium chloride. The protein is Multidrug resistance protein MdtN (mdtN) of Escherichia coli O157:H7.